We begin with the raw amino-acid sequence, 455 residues long: MDPRLREEVVRLIIALTSDNGASLSKGLESRVSALEKTSQIHSDTILRITQGLDDANKRIIALEQSRDDLVASVSDAQLAISRLESSIGALQTVVNGLDSSVTQLGARVGQLETGLAELRVDHDNLVARVDTAERNIGSLTTELSTLTLRVTSIQADFESRISTLERTAVTSAGAPLSIRNNRMTMGLNDGLTLSGNNLAIRLPGNTGLNIQNGGLQFRFNTDQFQIVNNNLTLKTTVFDSINSRIGATEQSYVASAVTPLRLNSSTKVLDMLIDSSTLEINSSGQLTVRSTSPNLRYPIADVSGGIGMSPNYRFRQSMWIGIVSYSGSGLNWRVQVNSDIFIVDDYIHICLPAFDGFSIADGGDLSLNFVTGLLPPLLTGDTEPAFHNDVVTYGAQTVAIGLSSGGAPQYMSKNLWVEQWQDGVLRLRVEGGGSITHSNSKWPAMTVSYPRSFT.

Positions Met1–Ile307 are tail. Residues Leu116–Thr148 adopt a coiled-coil conformation. N-linked (GlcNAc...) asparagine; by host glycans are attached at residues Asn231, Asn264, and Asn282. The tract at residues Gly308–Thr455 is head.

It belongs to the orthoreovirus sigma-1 protein family. In terms of assembly, homotrimer. Interacts (via the head region) with human F11R. In terms of processing, undergoes dramatic conformational rearrangements during viral disassembly in the endocytic pathway.

The protein localises to the virion. Functionally, fiber-like molecule that attaches the virion to the host cell membrane by binding to the primary receptor F11R/JAM-A and to sialic acid containing proteins (coreceptor). The interaction of sigma-1 with F11R is required for NF-kB activation and apoptosis. Binding to both sialic acid and F11R is required to induce maximal levels of apoptosis. The chain is Outer capsid protein sigma-1 (S1) from Reovirus type 3 (strain Dearing) (T3D).